We begin with the raw amino-acid sequence, 337 residues long: Large ribosomal subunit protein uL3 (337 aa).

The tract at residues 1 to 32 (MAKGHRPRRGSLAYSPRKRSQSHIPRFRSWPE) is disordered.

Belongs to the universal ribosomal protein uL3 family. In terms of assembly, part of the 50S ribosomal subunit. Forms a cluster with proteins L14 and L24e.

Functionally, one of the primary rRNA binding proteins, it binds directly near the 3'-end of the 23S rRNA, where it nucleates assembly of the 50S subunit. The chain is Large ribosomal subunit protein uL3 from Methanococcoides burtonii (strain DSM 6242 / NBRC 107633 / OCM 468 / ACE-M).